Reading from the N-terminus, the 316-residue chain is Malate dehydrogenase (316 aa).

Residues 12–17 (GAGNIG) and D36 each bind NAD(+). Substrate is bound by residues R85 and R91. Residues N98 and 121–123 (VTN) each bind NAD(+). Substrate-binding residues include N123 and R154. H178 (proton acceptor) is an active-site residue.

The protein belongs to the LDH/MDH superfamily. MDH type 3 family.

It carries out the reaction (S)-malate + NAD(+) = oxaloacetate + NADH + H(+). Functionally, catalyzes the reversible oxidation of malate to oxaloacetate. The protein is Malate dehydrogenase of Wolbachia sp. subsp. Brugia malayi (strain TRS).